Consider the following 420-residue polypeptide: Dynein axonemal assembly factor 4 (420 aa).

The CS domain occupies 3–87; that stretch reads LQVSDYSWQQ…KEAAMWETLS (85 aa). The segment at 7–103 is mediates interaction with ESR1 and STUB1; sequence DYSWQQTKTA…EMMQRIREKS (97 aa). 3 TPR repeats span residues 290–323, 324–357, and 366–399; these read PEWL…NNKM, PLLY…LMPP, and MKAH…DPSN.

In terms of assembly, interacts with ZMYND10. Interacts with STUB1. Interacts with ESR1 and ESR2. Interacts with DNAAF2. Interacts with CCT3, CCT4, CCT5 and CCT8. Interacts with DNAAF6/PIH1D3.

The protein localises to the nucleus. It localises to the cytoplasm. It is found in the cell projection. The protein resides in the neuron projection. Its subcellular location is the dynein axonemal particle. Involved in neuronal migration during development of the cerebral neocortex. May regulate the stability and proteasomal degradation of the estrogen receptors that play an important role in neuronal differentiation, survival and plasticity. Axonemal dynein assembly factor required for ciliary motility. This chain is Dynein axonemal assembly factor 4, found in Pan troglodytes (Chimpanzee).